A 202-amino-acid polypeptide reads, in one-letter code: Adenylyl-sulfate kinase (202 aa).

ATP is bound at residue Gly35–Ser42. Ser109 acts as the Phosphoserine intermediate in catalysis.

It belongs to the APS kinase family.

The catalysed reaction is adenosine 5'-phosphosulfate + ATP = 3'-phosphoadenylyl sulfate + ADP + H(+). Its pathway is sulfur metabolism; hydrogen sulfide biosynthesis; sulfite from sulfate: step 2/3. Catalyzes the synthesis of activated sulfate. This chain is Adenylyl-sulfate kinase, found in Bacteroides fragilis (strain ATCC 25285 / DSM 2151 / CCUG 4856 / JCM 11019 / LMG 10263 / NCTC 9343 / Onslow / VPI 2553 / EN-2).